Reading from the N-terminus, the 214-residue chain is Pyridoxine/pyridoxamine 5'-phosphate oxidase (214 aa).

Substrate contacts are provided by residues 8–11 (RKSY) and Lys67. Residues 62-67 (RVVLLK), 77-78 (YT), Lys84, and Gln106 each bind FMN. Positions 124, 128, and 132 each coordinate substrate. Residues 141–142 (QS) and Trp186 contribute to the FMN site. 192-194 (RLH) contributes to the substrate binding site. FMN is bound at residue Arg196.

Belongs to the pyridoxamine 5'-phosphate oxidase family. In terms of assembly, homodimer. The cofactor is FMN.

The enzyme catalyses pyridoxamine 5'-phosphate + O2 + H2O = pyridoxal 5'-phosphate + H2O2 + NH4(+). It catalyses the reaction pyridoxine 5'-phosphate + O2 = pyridoxal 5'-phosphate + H2O2. The protein operates within cofactor metabolism; pyridoxal 5'-phosphate salvage; pyridoxal 5'-phosphate from pyridoxamine 5'-phosphate: step 1/1. Its pathway is cofactor metabolism; pyridoxal 5'-phosphate salvage; pyridoxal 5'-phosphate from pyridoxine 5'-phosphate: step 1/1. Functionally, catalyzes the oxidation of either pyridoxine 5'-phosphate (PNP) or pyridoxamine 5'-phosphate (PMP) into pyridoxal 5'-phosphate (PLP). The chain is Pyridoxine/pyridoxamine 5'-phosphate oxidase from Flavobacterium psychrophilum (strain ATCC 49511 / DSM 21280 / CIP 103535 / JIP02/86).